A 310-amino-acid polypeptide reads, in one-letter code: N-acetyl-gamma-glutamyl-phosphate reductase (310 aa).

Cysteine 117 is an active-site residue.

This sequence belongs to the NAGSA dehydrogenase family. Type 2 subfamily.

It is found in the cytoplasm. The catalysed reaction is N-acetyl-L-glutamate 5-semialdehyde + phosphate + NADP(+) = N-acetyl-L-glutamyl 5-phosphate + NADPH + H(+). Its pathway is amino-acid biosynthesis; L-arginine biosynthesis; N(2)-acetyl-L-ornithine from L-glutamate: step 3/4. Functionally, catalyzes the NADPH-dependent reduction of N-acetyl-5-glutamyl phosphate to yield N-acetyl-L-glutamate 5-semialdehyde. This is N-acetyl-gamma-glutamyl-phosphate reductase from Rhizobium etli (strain CIAT 652).